The sequence spans 345 residues: Esterase (345 aa).

The signal sequence occupies residues 1 to 39 (MSSAMRKTTNSPVVRRLTAAAVALGSCLALAGPAGSAGA). 3 cysteine pairs are disulfide-bonded: cysteine 73-cysteine 103, cysteine 156-cysteine 180, and cysteine 236-cysteine 294.

Its subcellular location is the secreted. This chain is Esterase (estA), found in Streptomyces scabiei.